The sequence spans 485 residues: Signal recognition particle protein (485 aa).

GTP is bound by residues 107-114 (GLQGAGKT), 189-193 (DTAGR), and 247-250 (TKLD). A disordered region spans residues 452–485 (GFGGGAPAPQPGFRGYGPPKKQKKGSKKKKGFGL). Basic residues predominate over residues 471-485 (KKQKKGSKKKKGFGL).

The protein belongs to the GTP-binding SRP family. SRP54 subfamily. As to quaternary structure, part of the signal recognition particle protein translocation system, which is composed of SRP and FtsY.

The protein resides in the cytoplasm. The catalysed reaction is GTP + H2O = GDP + phosphate + H(+). Functionally, involved in targeting and insertion of nascent membrane proteins into the cytoplasmic membrane. Binds to the hydrophobic signal sequence of the ribosome-nascent chain (RNC) as it emerges from the ribosomes. The SRP-RNC complex is then targeted to the cytoplasmic membrane where it interacts with the SRP receptor FtsY. In Synechococcus elongatus (strain ATCC 33912 / PCC 7942 / FACHB-805) (Anacystis nidulans R2), this protein is Signal recognition particle protein.